The following is a 613-amino-acid chain: tRNA 5-methylaminomethyl-2-thiouridine biosynthesis bifunctional protein MnmC (613 aa).

The interval 1 to 225 (MKKAKLIFKD…KREMIKAYLE (225 aa)) is tRNA (mnm(5)s(2)U34)-methyltransferase. The segment at 252–613 (IGAGISSAVL…FLIRKLKKGL (362 aa)) is FAD-dependent cmnm(5)s(2)U34 oxidoreductase.

In the N-terminal section; belongs to the methyltransferase superfamily. tRNA (mnm(5)s(2)U34)-methyltransferase family. This sequence in the C-terminal section; belongs to the DAO family. The cofactor is FAD.

It is found in the cytoplasm. The enzyme catalyses 5-aminomethyl-2-thiouridine(34) in tRNA + S-adenosyl-L-methionine = 5-methylaminomethyl-2-thiouridine(34) in tRNA + S-adenosyl-L-homocysteine + H(+). Functionally, catalyzes the last two steps in the biosynthesis of 5-methylaminomethyl-2-thiouridine (mnm(5)s(2)U) at the wobble position (U34) in tRNA. Catalyzes the FAD-dependent demodification of cmnm(5)s(2)U34 to nm(5)s(2)U34, followed by the transfer of a methyl group from S-adenosyl-L-methionine to nm(5)s(2)U34, to form mnm(5)s(2)U34. This chain is tRNA 5-methylaminomethyl-2-thiouridine biosynthesis bifunctional protein MnmC, found in Campylobacter jejuni subsp. jejuni serotype O:2 (strain ATCC 700819 / NCTC 11168).